The sequence spans 351 residues: Hydroxymethylglutaryl-CoA synthase (351 aa).

Glutamate 80 acts as the Proton donor/acceptor in catalysis. Catalysis depends on cysteine 112, which acts as the Acyl-thioester intermediate. (3S)-3-hydroxy-3-methylglutaryl-CoA is bound by residues cysteine 112 and serine 153. CoA is bound at residue arginine 199. The (3S)-3-hydroxy-3-methylglutaryl-CoA site is built by threonine 201 and histidine 234. Catalysis depends on histidine 234, which acts as the Proton donor/acceptor. Residue lysine 239 participates in CoA binding. Positions 243, 266, and 296 each coordinate (3S)-3-hydroxy-3-methylglutaryl-CoA.

Belongs to the thiolase-like superfamily. Archaeal HMG-CoA synthase family. As to quaternary structure, interacts with acetoacetyl-CoA thiolase that catalyzes the precedent step in the pathway and with a DUF35 protein. The acetoacetyl-CoA thiolase/HMG-CoA synthase complex channels the intermediate via a fused CoA-binding site, which allows for efficient coupling of the endergonic thiolase reaction with the exergonic HMGCS reaction.

The enzyme catalyses acetoacetyl-CoA + acetyl-CoA + H2O = (3S)-3-hydroxy-3-methylglutaryl-CoA + CoA + H(+). The protein operates within metabolic intermediate biosynthesis; (R)-mevalonate biosynthesis; (R)-mevalonate from acetyl-CoA: step 2/3. In terms of biological role, catalyzes the condensation of acetyl-CoA with acetoacetyl-CoA to form 3-hydroxy-3-methylglutaryl-CoA (HMG-CoA). Functions in the mevalonate (MVA) pathway leading to isopentenyl diphosphate (IPP), a key precursor for the biosynthesis of isoprenoid compounds that are building blocks of archaeal membrane lipids. This is Hydroxymethylglutaryl-CoA synthase from Thermoplasma acidophilum (strain ATCC 25905 / DSM 1728 / JCM 9062 / NBRC 15155 / AMRC-C165).